Reading from the N-terminus, the 490-residue chain is MKQHSVGRVETKTFAINDKLKLSSGKTLENVELAYETYGELNTAKTNAILVCHALTGDAHAAGWHKNATKPGWWEIVIGPGKALDTDKYFVICSNVLGGCKGSTGPASINPKTNEEYALDFPIITIEDMVHAQKKLIEHLGIEKLHAVVGGSMGGMQALQWTVSYPNMMKKASIIATTARSSPQQIAFNEVGRQSIISDPFWNNGQYYGKNRTPRSGLAVARMIGHITYLSDESMYIKFGRELQDKDQLSYDFTLDFQVESYLHHQGESFVKRFDANSYLYITKAVDYFDLSVDGSLPDGLKNVKAKFQIIAVDSDWLYPVDQSKDLLTALQTLGVEVSYNEVKSDYGHDAFLLENGQMNFLLNNFLSENVVDDLMKTDVPTIDINSTIKDAANIMFDNQVTHLPVVDENDKLLGIVTAWDLSKSIAKDCKLLEDVMTKDVRYCKSTDSIEYISRQMKKFDISCLPVVNDDLCLEGIITTDQISHLISSY.

Residues Asn47 to Glu355 enclose the AB hydrolase-1 domain. Ser152 serves as the catalytic Nucleophile. Position 222 (Arg222) interacts with substrate. Residues Asp316 and His349 contribute to the active site. Residue Asp350 participates in substrate binding. CBS domains lie at Met376–Val436 and Met437–Tyr490.

This sequence belongs to the AB hydrolase superfamily. MetX family. As to quaternary structure, homodimer.

Its subcellular location is the cytoplasm. It carries out the reaction L-homoserine + acetyl-CoA = O-acetyl-L-homoserine + CoA. It participates in amino-acid biosynthesis; L-methionine biosynthesis via de novo pathway; O-acetyl-L-homoserine from L-homoserine: step 1/1. In terms of biological role, transfers an acetyl group from acetyl-CoA to L-homoserine, forming acetyl-L-homoserine. This Methanobrevibacter ruminantium (strain ATCC 35063 / DSM 1093 / JCM 13430 / OCM 146 / M1) (Methanobacterium ruminantium) protein is Homoserine O-acetyltransferase.